A 388-amino-acid polypeptide reads, in one-letter code: uncharacterized protein (388 aa).

This is an uncharacterized protein from Ictaluridae (bullhead catfishes).